The primary structure comprises 246 residues: UDP-N-acetyl-D-mannosaminuronic acid transferase (246 aa).

This sequence belongs to the glycosyltransferase 26 family.

It catalyses the reaction UDP-N-acetyl-alpha-D-mannosaminouronate + N-acetyl-alpha-D-glucosaminyl-di-trans,octa-cis-undecaprenyl diphosphate = beta-D-ManNAcA-(1-&gt;4)-alpha-D-GlcNAc-di-trans,octa-cis-undecaprenyl diphosphate + UDP + H(+). It participates in bacterial outer membrane biogenesis; enterobacterial common antigen biosynthesis. Catalyzes the synthesis of Und-PP-GlcNAc-ManNAcA (Lipid II), the second lipid-linked intermediate involved in enterobacterial common antigen (ECA) synthesis. The protein is UDP-N-acetyl-D-mannosaminuronic acid transferase of Salmonella paratyphi A (strain ATCC 9150 / SARB42).